The primary structure comprises 333 residues: Ketol-acid reductoisomerase (NADP(+)) (333 aa).

The KARI N-terminal Rossmann domain maps to alanine 2 to threonine 182. NADP(+) contacts are provided by residues phenylalanine 25 to glutamine 28, serine 51, serine 53, and aspartate 83 to glutamine 86. Residue histidine 108 is part of the active site. Glycine 134 is a binding site for NADP(+). One can recognise a KARI C-terminal knotted domain in the interval threonine 183 to isoleucine 328. Mg(2+) is bound by residues aspartate 191, glutamate 195, glutamate 227, and glutamate 231. Serine 252 contacts substrate.

It belongs to the ketol-acid reductoisomerase family. Mg(2+) is required as a cofactor.

The catalysed reaction is (2R)-2,3-dihydroxy-3-methylbutanoate + NADP(+) = (2S)-2-acetolactate + NADPH + H(+). It catalyses the reaction (2R,3R)-2,3-dihydroxy-3-methylpentanoate + NADP(+) = (S)-2-ethyl-2-hydroxy-3-oxobutanoate + NADPH + H(+). Its pathway is amino-acid biosynthesis; L-isoleucine biosynthesis; L-isoleucine from 2-oxobutanoate: step 2/4. It participates in amino-acid biosynthesis; L-valine biosynthesis; L-valine from pyruvate: step 2/4. Functionally, involved in the biosynthesis of branched-chain amino acids (BCAA). Catalyzes an alkyl-migration followed by a ketol-acid reduction of (S)-2-acetolactate (S2AL) to yield (R)-2,3-dihydroxy-isovalerate. In the isomerase reaction, S2AL is rearranged via a Mg-dependent methyl migration to produce 3-hydroxy-3-methyl-2-ketobutyrate (HMKB). In the reductase reaction, this 2-ketoacid undergoes a metal-dependent reduction by NADPH to yield (R)-2,3-dihydroxy-isovalerate. In Caldicellulosiruptor bescii (strain ATCC BAA-1888 / DSM 6725 / KCTC 15123 / Z-1320) (Anaerocellum thermophilum), this protein is Ketol-acid reductoisomerase (NADP(+)).